The following is a 185-amino-acid chain: Translocon-associated protein subunit gamma (185 aa).

An N-acetylmethionine modification is found at methionine 1. Residues 1-27 (MAPKGGSKQQSEEDLLLQDFSRNLSAK) lie on the Lumenal side of the membrane. Phosphoserine is present on residues serine 7 and serine 11. Residues 28-48 (SSALFFGNAFIVSAIPIWLYW) traverse the membrane as a helical segment. Topologically, residues 49–54 (RIWHMD) are cytoplasmic. Residues 55 to 76 (LIQSAVLYSVMTLVSTYLVAFA) traverse the membrane as a helical segment. The Lumenal portion of the chain corresponds to 77-135 (YKNVKFVLKHKVAQKREDAVSKEVTRKLSEADNRKMSRKEKDERILWKKNEVADYEATT). Serine 105 bears the Phosphoserine mark. A helical transmembrane segment spans residues 136 to 157 (FSIFYNNTLFLVLVIVASFFIL). At 158-163 (KNFNPT) the chain is on the cytoplasmic side. A helical transmembrane segment spans residues 164–184 (VNYILSISASSGLIALLSTGS).

Belongs to the TRAP-gamma family. In terms of assembly, heterotetramer of TRAP-alpha, TRAP-beta, TRAP-delta and TRAP-gamma.

It localises to the endoplasmic reticulum membrane. TRAP proteins are part of a complex whose function is to bind calcium to the ER membrane and thereby regulate the retention of ER resident proteins. The protein is Translocon-associated protein subunit gamma (Ssr3) of Mus musculus (Mouse).